A 373-amino-acid polypeptide reads, in one-letter code: Probable dual-specificity RNA methyltransferase RlmN (373 aa).

The active-site Proton acceptor is the Glu111. A Radical SAM core domain is found at 117–356 (GPGRLTACLS…LRKSYGTSIH (240 aa)). Residues Cys124 and Cys359 are joined by a disulfide bond. [4Fe-4S] cluster is bound by residues Cys131, Cys135, and Cys138. S-adenosyl-L-methionine is bound by residues 183–184 (GE), Ser216, 239–241 (SLH), and Asn316. The active-site S-methylcysteine intermediate is the Cys359.

This sequence belongs to the radical SAM superfamily. RlmN family. [4Fe-4S] cluster serves as cofactor.

It localises to the cytoplasm. The catalysed reaction is adenosine(2503) in 23S rRNA + 2 reduced [2Fe-2S]-[ferredoxin] + 2 S-adenosyl-L-methionine = 2-methyladenosine(2503) in 23S rRNA + 5'-deoxyadenosine + L-methionine + 2 oxidized [2Fe-2S]-[ferredoxin] + S-adenosyl-L-homocysteine. It carries out the reaction adenosine(37) in tRNA + 2 reduced [2Fe-2S]-[ferredoxin] + 2 S-adenosyl-L-methionine = 2-methyladenosine(37) in tRNA + 5'-deoxyadenosine + L-methionine + 2 oxidized [2Fe-2S]-[ferredoxin] + S-adenosyl-L-homocysteine. Functionally, specifically methylates position 2 of adenine 2503 in 23S rRNA and position 2 of adenine 37 in tRNAs. The protein is Probable dual-specificity RNA methyltransferase RlmN of Chlorobium phaeovibrioides (strain DSM 265 / 1930) (Prosthecochloris vibrioformis (strain DSM 265)).